The primary structure comprises 406 residues: MMEGLDDGPDFLSEEDRGLKAINVDLQSDAALQVDISDALSERDKVKFTVHTKSSLPNFKQNEFSVVRQHEEFIWLHDSFVENEDYAGYIIPPAPPRPDFDASREKLQKLGEGEGSMTKEEFTKMKQELEAEYLAIFKKTVAMHEVFLCRVAAHPILRRDLNFHVFLEYNQDLSVRGKNKKEKLEDFFKNMVKSADGVIVSGVKDVDDFFEHERTFLLEYHNRVKDASAKSDRMTRSHKSAADDYNRIGSSLYALGTQDSTDICKFFLKVSELFDKTRKIEARVSADEDLKLSDLLKYYLRESQAAKDLLYRRSRSLVDYENANKALDKARAKNKDVLQAETSQQLCCQKFEKISESAKQELIDFKTRRVAAFRKNLVELAELELKHAKGNLQLLQNCLAVLNGDT.

N-acetylmethionine is present on Met1. Met2 bears the N-acetylmethionine; in Sorting nexin-6, N-terminally processed mark. The segment at 2-179 (MEGLDDGPDF…NQDLSVRGKN (178 aa)) is interaction with PIM1. One can recognise a PX domain in the interval 26–173 (LQSDAALQVD…HVFLEYNQDL (148 aa)). A 1,2-diacyl-sn-glycero-3-phospho-(1D-myo-inositol-4,5-bisphosphate) contacts are provided by residues 41 to 47 (SERDKVK), 100 to 106 (FDASREK), and 114 to 117 (EGSM). Ser116 and Ser194 each carry phosphoserine. The interval 182-199 (EKLEDFFKNMVKSADGVI) is membrane-binding amphipathic helix. Residues 203–406 (VKDVDDFFEH…NCLAVLNGDT (204 aa)) enclose the BAR domain.

The protein belongs to the sorting nexin family. Forms heterodimers with BAR domain-containing sorting nexins SNX1 and SNX2. The heterodimers are proposed to self-assemble into helical arrays on the membrane to stabilize and expand local membrane curvature underlying endosomal tubule formation. Thought to be a component of the originally described retromer complex (also called SNX-BAR retromer) which is a pentamer containing the heterotrimeric retromer cargo-selective complex (CSC), also described as vacuolar protein sorting subcomplex (VPS), and a heterodimeric membrane-deforming subcomplex formed between SNX1 or SNX2 and SNX5 or SNX6 (also called SNX-BAR subcomplex); the respective CSC and SNX-BAR subcomplexes associate with low affinity. Interacts with SNX1, SNX2, VPS26A, VPS29, VPS35, CDKN1B, TGFB receptors, BACE1, BRMS1, PIP5K1C isoform 3. Interacts with DCTN1; the association with DCTN1 is involved in movement of retromer-c ontaining vesicles toward the TGN. Interacts with CDKN1B and GIT1. Interacts with PIM1; translocating SNX6 to the nucleus. In vitro phosphorylated by PIM1; not affecting PIM1-dependent nuclear translocation.

It is found in the early endosome. The protein resides in the early endosome membrane. It localises to the cytoplasmic vesicle. The protein localises to the cytoplasm. Its subcellular location is the nucleus. Its function is as follows. Involved in several stages of intracellular trafficking. Interacts with membranes phosphatidylinositol 3,4-bisphosphate and/or phosphatidylinositol 4,5-bisphosphate. Acts in part as component of the retromer membrane-deforming SNX-BAR subcomplex. The SNX-BAR retromer mediates retrograde transport of cargo proteins from endosomes to the trans-Golgi network (TGN) and is involved in endosome-to-plasma membrane transport for cargo protein recycling. The SNX-BAR subcomplex functions to deform the donor membrane into a tubular profile called endosome-to-TGN transport carrier (ETC). Does not have in vitro vesicle-to-membrane remodeling activity. Involved in retrograde endosome-to-TGN transport of lysosomal enzyme receptor IGF2R. May function as link between transport vesicles and dynactin. Negatively regulates retrograde transport of BACE1 from the cell surface to the trans-Golgi network. Involved in E-cadherin sorting and degradation; inhibits PIP5K1C isoform 3-mediated E-cadherin degradation. In association with GIT1 involved in EGFR degradation. Promotes lysosomal degradation of CDKN1B. May contribute to transcription regulation. This Homo sapiens (Human) protein is Sorting nexin-6 (SNX6).